We begin with the raw amino-acid sequence, 415 residues long: Packaging protein 3 (415 aa).

2 disordered regions span residues 1 to 56 and 66 to 85; these read MHPV…RRRA and EGLA…VQLK. The interaction with packaging protein 1 stretch occupies residues 1–173; the sequence is MHPVLRQMRP…VNQEINFQKS (173 aa). Over residues 31–46 the composition is skewed to low complexity; the sequence is PTASGGATSAADAAAD. Ser-75 carries the phosphoserine; by host modification. Positions 76 to 85 are enriched in basic and acidic residues; sequence PERHPRVQLK. Residue Ser-360 is modified to Phosphoserine; by host. Over residues 381 to 394 the composition is skewed to low complexity; sequence GAGPGLAVAPARAG. The disordered stretch occupies residues 381-415; sequence GAGPGLAVAPARAGNVGGVEEYDEDDEYEPEDGEY. The segment covering 400–415 has biased composition (acidic residues); the sequence is EEYDEDDEYEPEDGEY.

The protein belongs to the adenoviridae packaging protein 3 family. As to quaternary structure, part of the genome packaging complex composed of packaging proteins 1, 2 and 3; this complex specifically binds to the packaging sequence on the left end of viral genomic DNA and performs packaging of the viral genome. Interacts with hexon-linking protein IIIa; this interaction is required to promote correct genome packaging. Post-translationally, cleaved at different sites by the viral protease during virion maturation.

It localises to the host nucleus. Involved in viral genome packaging through its interaction with packaging proteins 1 and 2. After proteolytic cleavage by adenovirus protease, L1 52/55k protein is removed from the capsid during viral maturation. The protein is Packaging protein 3 of Human adenovirus C serotype 2 (HAdV-2).